A 278-amino-acid polypeptide reads, in one-letter code: Ribosomal RNA small subunit methyltransferase A (278 aa).

S-adenosyl-L-methionine contacts are provided by Asn-27, Leu-29, Gly-54, Glu-75, Asp-101, and Asn-122.

Belongs to the class I-like SAM-binding methyltransferase superfamily. rRNA adenine N(6)-methyltransferase family. RsmA subfamily.

It is found in the cytoplasm. It catalyses the reaction adenosine(1518)/adenosine(1519) in 16S rRNA + 4 S-adenosyl-L-methionine = N(6)-dimethyladenosine(1518)/N(6)-dimethyladenosine(1519) in 16S rRNA + 4 S-adenosyl-L-homocysteine + 4 H(+). Specifically dimethylates two adjacent adenosines (A1518 and A1519) in the loop of a conserved hairpin near the 3'-end of 16S rRNA in the 30S particle. May play a critical role in biogenesis of 30S subunits. The protein is Ribosomal RNA small subunit methyltransferase A of Brucella anthropi (strain ATCC 49188 / DSM 6882 / CCUG 24695 / JCM 21032 / LMG 3331 / NBRC 15819 / NCTC 12168 / Alc 37) (Ochrobactrum anthropi).